Here is a 236-residue protein sequence, read N- to C-terminus: ATP-dependent dethiobiotin synthetase BioD (236 aa).

Thr19 provides a ligand contact to Mg(2+). Lys40 is a catalytic residue. Residues Asp61 and Glu122 each coordinate Mg(2+). Residues Asp61, 122-125 (EGVG), 182-183 (NT), and 211-213 (PRL) each bind ATP.

This sequence belongs to the dethiobiotin synthetase family. As to quaternary structure, homodimer. The cofactor is Mg(2+).

The protein localises to the cytoplasm. The catalysed reaction is (7R,8S)-7,8-diammoniononanoate + CO2 + ATP = (4R,5S)-dethiobiotin + ADP + phosphate + 3 H(+). It functions in the pathway cofactor biosynthesis; biotin biosynthesis; biotin from 7,8-diaminononanoate: step 1/2. Functionally, catalyzes a mechanistically unusual reaction, the ATP-dependent insertion of CO2 between the N7 and N8 nitrogen atoms of 7,8-diaminopelargonic acid (DAPA, also called 7,8-diammoniononanoate) to form a ureido ring. The polypeptide is ATP-dependent dethiobiotin synthetase BioD (Janthinobacterium sp. (strain Marseille) (Minibacterium massiliensis)).